The primary structure comprises 370 residues: 4-hydroxy-3-methylbut-2-en-1-yl diphosphate synthase (flavodoxin) (370 aa).

The [4Fe-4S] cluster site is built by cysteine 268, cysteine 271, cysteine 303, and glutamate 310.

This sequence belongs to the IspG family. It depends on [4Fe-4S] cluster as a cofactor.

The catalysed reaction is (2E)-4-hydroxy-3-methylbut-2-enyl diphosphate + oxidized [flavodoxin] + H2O + 2 H(+) = 2-C-methyl-D-erythritol 2,4-cyclic diphosphate + reduced [flavodoxin]. The protein operates within isoprenoid biosynthesis; isopentenyl diphosphate biosynthesis via DXP pathway; isopentenyl diphosphate from 1-deoxy-D-xylulose 5-phosphate: step 5/6. Its function is as follows. Converts 2C-methyl-D-erythritol 2,4-cyclodiphosphate (ME-2,4cPP) into 1-hydroxy-2-methyl-2-(E)-butenyl 4-diphosphate. The polypeptide is 4-hydroxy-3-methylbut-2-en-1-yl diphosphate synthase (flavodoxin) (Bacillus licheniformis (strain ATCC 14580 / DSM 13 / JCM 2505 / CCUG 7422 / NBRC 12200 / NCIMB 9375 / NCTC 10341 / NRRL NRS-1264 / Gibson 46)).